We begin with the raw amino-acid sequence, 514 residues long: Putative binding protein HI_0213 (514 aa).

The first 23 residues, Met-1 to Ala-23, serve as a signal peptide directing secretion. Cys-24 carries N-palmitoyl cysteine lipidation. The S-diacylglycerol cysteine moiety is linked to residue Cys-24.

This sequence belongs to the bacterial solute-binding protein 5 family.

The protein localises to the cell membrane. In terms of biological role, part of a binding-protein-dependent transport system. In Haemophilus influenzae (strain ATCC 51907 / DSM 11121 / KW20 / Rd), this protein is Putative binding protein HI_0213.